The chain runs to 129 residues: Phosphoribosyl-AMP cyclohydrolase (129 aa).

Position 79 (Asp-79) interacts with Mg(2+). Cys-80 is a binding site for Zn(2+). Mg(2+) contacts are provided by Asp-81 and Asp-83. Zn(2+) is bound by residues Cys-96 and Cys-103.

Belongs to the PRA-CH family. In terms of assembly, homodimer. It depends on Mg(2+) as a cofactor. Requires Zn(2+) as cofactor.

It is found in the cytoplasm. The catalysed reaction is 1-(5-phospho-beta-D-ribosyl)-5'-AMP + H2O = 1-(5-phospho-beta-D-ribosyl)-5-[(5-phospho-beta-D-ribosylamino)methylideneamino]imidazole-4-carboxamide. It functions in the pathway amino-acid biosynthesis; L-histidine biosynthesis; L-histidine from 5-phospho-alpha-D-ribose 1-diphosphate: step 3/9. Functionally, catalyzes the hydrolysis of the adenine ring of phosphoribosyl-AMP. The polypeptide is Phosphoribosyl-AMP cyclohydrolase (Magnetococcus marinus (strain ATCC BAA-1437 / JCM 17883 / MC-1)).